We begin with the raw amino-acid sequence, 214 residues long: Osteoclast-stimulating factor 1 (214 aa).

Residues 12–71 enclose the SH3 domain; that stretch reads GQVKVFRALYTFEPRTPDELYFEEGDILYIADMSDTNWWKGTCKGKTGLIPSNYVAEQAE. 3 ANK repeats span residues 72-101, 105-135, and 139-168; these read SIDN…GVNG, AGST…ELNQ, and LGDT…RTDL.

The protein resides in the cytoplasm. Its function is as follows. Induces bone resorption, acting probably through a signaling cascade which results in the secretion of factor(s) enhancing osteoclast formation and activity. The protein is Osteoclast-stimulating factor 1 (ostf1) of Xenopus laevis (African clawed frog).